Here is a 331-residue protein sequence, read N- to C-terminus: UDP-GalNAc:beta-1,3-N-acetylgalactosaminyltransferase 1 (331 aa).

At 1 to 20 (MASALWTVLPSRMSLRSLQW) the chain is on the cytoplasmic side. Residues 21 to 43 (SLLLLSLLSFLVMWYLSLPHYNV) form a helical; Signal-anchor for type II membrane protein membrane-spanning segment. The Lumenal segment spans residues 44 to 331 (IERVNWMYFY…VMLRNTTCHY (288 aa)). 5 N-linked (GlcNAc...) asparagine glycosylation sites follow: N72, N154, N198, N212, and N326.

It belongs to the glycosyltransferase 31 family. The cofactor is Mg(2+).

The protein localises to the golgi apparatus membrane. It carries out the reaction a globoside Gb3Cer (d18:1(4E)) + UDP-N-acetyl-alpha-D-galactosamine = a globoside Gb4Cer (d18:1(4E)) + UDP + H(+). The protein operates within protein modification; protein glycosylation. In terms of biological role, transfers N-acetylgalactosamine onto globotriaosylceramide. Plays a critical role in preimplantation stage embryonic development. This chain is UDP-GalNAc:beta-1,3-N-acetylgalactosaminyltransferase 1 (B3GALNT1), found in Pongo abelii (Sumatran orangutan).